The sequence spans 145 residues: 3-dehydroquinate dehydratase (145 aa).

Tyr-24 (proton acceptor) is an active-site residue. Residues Asn-76, His-82, and Asp-89 each contribute to the substrate site. Residue His-102 is the Proton donor of the active site. Residues 103–104 (VS) and Arg-113 each bind substrate.

This sequence belongs to the type-II 3-dehydroquinase family. In terms of assembly, homododecamer.

The enzyme catalyses 3-dehydroquinate = 3-dehydroshikimate + H2O. It functions in the pathway metabolic intermediate biosynthesis; chorismate biosynthesis; chorismate from D-erythrose 4-phosphate and phosphoenolpyruvate: step 3/7. In terms of biological role, catalyzes a trans-dehydration via an enolate intermediate. In Herminiimonas arsenicoxydans, this protein is 3-dehydroquinate dehydratase.